The following is a 127-amino-acid chain: Small ribosomal subunit protein uS11 (127 aa).

This sequence belongs to the universal ribosomal protein uS11 family. Part of the 30S ribosomal subunit. Interacts with proteins S7 and S18. Binds to IF-3.

Located on the platform of the 30S subunit, it bridges several disparate RNA helices of the 16S rRNA. Forms part of the Shine-Dalgarno cleft in the 70S ribosome. This is Small ribosomal subunit protein uS11 from Flavobacterium johnsoniae (strain ATCC 17061 / DSM 2064 / JCM 8514 / BCRC 14874 / CCUG 350202 / NBRC 14942 / NCIMB 11054 / UW101) (Cytophaga johnsonae).